A 410-amino-acid chain; its full sequence is Mating-type locus allele B5 protein (410 aa).

Residues 1–110 are variable domain between B alleles; the sequence is MSSDPNFSLT…FNVVSPAVVC (110 aa). Residues 107-184 constitute a DNA-binding region (homeobox; TALE-type); that stretch reads AVVCRNLSED…NARRRSGWSH (78 aa). The segment at 111 to 410 is highly conserved between B alleles; that stretch reads RNLSEDLPAY…PFLCLSVAFV (300 aa). Disordered stretches follow at residues 201-241, 275-336, and 366-395; these read VRAK…TPAD, NKKT…PELS, and ILQS…PDEV. The segment covering 206-222 has biased composition (low complexity); that stretch reads SSSNQSTPPSPTSEYPS. Residues 276 to 308 carry the Nuclear localization signal motif; the sequence is KKTPKPGMPRPVTTVTKRQPARKTKPAAKPKSR. Over residues 294–307 the composition is skewed to basic residues; it reads QPARKTKPAAKPKS. Residues 312-336 show a composition bias toward polar residues; sequence PRASTTPSIDSTLDSSKLESTPELS. The interval 333-410 is not essential for B5 function; sequence PELSMCSTAD…PFLCLSVAFV (78 aa). Basic residues predominate over residues 375-388; the sequence is RGNRKVKALPKRAG.

The protein belongs to the TALE/M-ATYP homeobox family.

Its subcellular location is the nucleus. Its function is as follows. The B locus has at least 25 alleles, and any combination of two different B alleles yields a multimeric regulatory protein, that activates genes responsible for the pathogenicity and for the sexual development of the fungus within the corn plant. The polypeptide is Mating-type locus allele B5 protein (Mycosarcoma maydis (Corn smut fungus)).